We begin with the raw amino-acid sequence, 84 residues long: Cell division topological specificity factor (84 aa).

This sequence belongs to the MinE family.

Functionally, prevents the cell division inhibition by proteins MinC and MinD at internal division sites while permitting inhibition at polar sites. This ensures cell division at the proper site by restricting the formation of a division septum at the midpoint of the long axis of the cell. The sequence is that of Cell division topological specificity factor from Chromohalobacter salexigens (strain ATCC BAA-138 / DSM 3043 / CIP 106854 / NCIMB 13768 / 1H11).